The following is a 599-amino-acid chain: Elongation factor 4 (599 aa).

Positions 5 to 187 (SHIRNFSIIA…RLVTTIPAPT (183 aa)) constitute a tr-type G domain. GTP contacts are provided by residues 17–22 (DHGKST) and 134–137 (NKID).

Belongs to the TRAFAC class translation factor GTPase superfamily. Classic translation factor GTPase family. LepA subfamily.

It is found in the cell inner membrane. The enzyme catalyses GTP + H2O = GDP + phosphate + H(+). Functionally, required for accurate and efficient protein synthesis under certain stress conditions. May act as a fidelity factor of the translation reaction, by catalyzing a one-codon backward translocation of tRNAs on improperly translocated ribosomes. Back-translocation proceeds from a post-translocation (POST) complex to a pre-translocation (PRE) complex, thus giving elongation factor G a second chance to translocate the tRNAs correctly. Binds to ribosomes in a GTP-dependent manner. This chain is Elongation factor 4, found in Pseudomonas fluorescens (strain ATCC BAA-477 / NRRL B-23932 / Pf-5).